A 202-amino-acid chain; its full sequence is MLSDELKLLVGLGNPGTEYEKTRHNVGFMVLEEIARKNNCSFRESKKLFGRTCEYGSGIEKTRLLMPNTYMNESGKSVRSAKDWFDFQNNQLIVLVDDMDLPLGKIRVRSKGSSGGHNGLKSIINHLGTAEFKRLKIGIGAPSNDQQERKSKTVSHVLGRFSKEEFIILNFIIQEIISCIESITSNNWEKISTRLNSYKPDN.

Tyr19 serves as a coordination point for tRNA. His24 (proton acceptor) is an active-site residue. TRNA-binding residues include Tyr70, Asn72, and Asn118.

This sequence belongs to the PTH family. As to quaternary structure, monomer.

It is found in the cytoplasm. It catalyses the reaction an N-acyl-L-alpha-aminoacyl-tRNA + H2O = an N-acyl-L-amino acid + a tRNA + H(+). In terms of biological role, hydrolyzes ribosome-free peptidyl-tRNAs (with 1 or more amino acids incorporated), which drop off the ribosome during protein synthesis, or as a result of ribosome stalling. Functionally, catalyzes the release of premature peptidyl moieties from peptidyl-tRNA molecules trapped in stalled 50S ribosomal subunits, and thus maintains levels of free tRNAs and 50S ribosomes. The protein is Peptidyl-tRNA hydrolase of Prochlorococcus marinus (strain NATL2A).